The primary structure comprises 435 residues: uncharacterized protein (435 aa).

This sequence belongs to the herpesviridae UL49 family.

This is an uncharacterized protein from Saimiriine herpesvirus 2 (strain 11) (SaHV-2).